The following is a 638-amino-acid chain: MRSSWADSAANAEESAPAAAANHGNSRLPRSSYVPPHLRGQAAPAAPAQAGALPSAAAAAQPSVGQPGVVGGPRWAGIVNGGGGGGGGSVGGSRQGFGAGGRGGGGGGGGGAWNSRPGGWDRRDREPDPFANSEAAEVDFEGENTGINFEAYEDIPVETSGHDVPPPANTFAEIDLGDALNENIRRCKYVKPTPVQRYAIPISIAGRDLMACAQTGSGKTAAFCFPIISGIMRSRPPPRSRGSRTAYPLALILSPTRELSVQIHEEARKFAYQTGVKVVVAYGGAPITQQLRELERGVEILVATPGRLMDLLERARVSLQMIKYLALDEADRMLDMGFEPQIRKIVEQMDMPPRGERQTMLFSATFPKEIQRMASDFLADYIFLAVGRVGSSTDLIVQRVEFVLDADKRSYLMDLLHAQRANGTHGKQALTLVFVETKRGADALENWLYNNGFPATSIHGDRTQQEREYALRSFKSGATPILVATDVAARGLDIPHVAHVINFDLPNDIDDYVHRIGRTGRAGKSGLATAFFNESNTPLARPLSELMQEANQEVPQWLERYAARSSFGGGGGRNRRSGGGARFGGRDFRRDRGSGGGGYGGGGGGYGGGGYGGGGGGGGYGGGSSYGGGGQGFSSAWD.

Low complexity-rich tracts occupy residues 1–21 (MRSS…AAAA) and 40–67 (GQAA…VGQP). Positions 1-129 (MRSSWADSAA…WDRRDREPDP (129 aa)) are disordered. A compositionally biased stretch (gly residues) spans 79–112 (VNGGGGGGGGSVGGSRQGFGAGGRGGGGGGGGGA). Residues 119–128 (GWDRRDREPD) are compositionally biased toward basic and acidic residues. The Q motif signature appears at 169 to 197 (NTFAEIDLGDALNENIRRCKYVKPTPVQR). Residues 200-384 (IPISIAGRDL…SDFLADYIFL (185 aa)) form the Helicase ATP-binding domain. Position 213 to 220 (213 to 220 (AQTGSGKT)) interacts with ATP. Positions 328–331 (DEAD) match the DEAD box motif. A Helicase C-terminal domain is found at 411–562 (YLMDLLHAQR…EVPQWLERYA (152 aa)). The segment at 565–638 (SSFGGGGGRN…GGQGFSSAWD (74 aa)) is disordered. Residues 567 to 583 (FGGGGGRNRRSGGGARF) are compositionally biased toward gly residues. Over residues 584–593 (GGRDFRRDRG) the composition is skewed to basic and acidic residues. Positions 594–632 (SGGGGYGGGGGGYGGGGYGGGGGGGGYGGGSSYGGGGQG) are enriched in gly residues.

Belongs to the DEAD box helicase family. DDX3/DED1 subfamily.

It catalyses the reaction ATP + H2O = ADP + phosphate + H(+). The sequence is that of DEAD-box ATP-dependent RNA helicase 52B (PL10B) from Oryza sativa subsp. japonica (Rice).